The sequence spans 981 residues: Bifunctional glutamine synthetase adenylyltransferase/adenylyl-removing enzyme (981 aa).

The interval 1-473 is adenylyl removase; the sequence is MTMPLPSIEQ…RSVFNNLIGF (473 aa). Residues 479–981 form an adenylyl transferase region; the sequence is ADDSDNAWSD…HQIWQKLFFE (503 aa).

Belongs to the GlnE family. Requires Mg(2+) as cofactor.

The enzyme catalyses [glutamine synthetase]-O(4)-(5'-adenylyl)-L-tyrosine + phosphate = [glutamine synthetase]-L-tyrosine + ADP. It catalyses the reaction [glutamine synthetase]-L-tyrosine + ATP = [glutamine synthetase]-O(4)-(5'-adenylyl)-L-tyrosine + diphosphate. Its function is as follows. Involved in the regulation of glutamine synthetase GlnA, a key enzyme in the process to assimilate ammonia. When cellular nitrogen levels are high, the C-terminal adenylyl transferase (AT) inactivates GlnA by covalent transfer of an adenylyl group from ATP to specific tyrosine residue of GlnA, thus reducing its activity. Conversely, when nitrogen levels are low, the N-terminal adenylyl removase (AR) activates GlnA by removing the adenylyl group by phosphorolysis, increasing its activity. The regulatory region of GlnE binds the signal transduction protein PII (GlnB) which indicates the nitrogen status of the cell. The polypeptide is Bifunctional glutamine synthetase adenylyltransferase/adenylyl-removing enzyme (Mannheimia succiniciproducens (strain KCTC 0769BP / MBEL55E)).